Consider the following 76-residue polypeptide: uncharacterized protein (76 aa).

This is an uncharacterized protein from Escherichia coli O157:H7.